Reading from the N-terminus, the 85-residue chain is Phosphocarrier protein HPr (85 aa).

In terms of domain architecture, HPr spans 1–85 (MFQNQVKITA…HLSLIMTELE (85 aa)). The active-site Pros-phosphohistidine intermediate is the His15.

Belongs to the HPr family.

It localises to the cytoplasm. Its function is as follows. General (non sugar-specific) component of the phosphoenolpyruvate-dependent sugar phosphotransferase system (sugar PTS). This major carbohydrate active-transport system catalyzes the phosphorylation of incoming sugar substrates concomitantly with their translocation across the cell membrane. The phosphoryl group from phosphoenolpyruvate (PEP) is transferred to the phosphoryl carrier protein HPr by enzyme I. Phospho-HPr then transfers it to the PTS EIIA domain. This chain is Phosphocarrier protein HPr (ptsH), found in Buchnera aphidicola subsp. Acyrthosiphon pisum (strain APS) (Acyrthosiphon pisum symbiotic bacterium).